Consider the following 250-residue polypeptide: Octanoyltransferase (250 aa).

The 181-residue stretch at 44-224 (GAGSDRLLLL…AVVQALNGDL (181 aa)) folds into the BPL/LPL catalytic domain. Substrate is bound by residues 82–89 (RGGKITWH), 154–156 (AIG), and 167–169 (GIS). The active-site Acyl-thioester intermediate is the Cys185. Positions 224-250 (LPVRDHDLPRPGTTPAAPNSTRVRSMT) are disordered. The span at 239–250 (AAPNSTRVRSMT) shows a compositional bias: polar residues.

This sequence belongs to the LipB family.

Its subcellular location is the cytoplasm. The catalysed reaction is octanoyl-[ACP] + L-lysyl-[protein] = N(6)-octanoyl-L-lysyl-[protein] + holo-[ACP] + H(+). Its pathway is protein modification; protein lipoylation via endogenous pathway; protein N(6)-(lipoyl)lysine from octanoyl-[acyl-carrier-protein]: step 1/2. In terms of biological role, catalyzes the transfer of endogenously produced octanoic acid from octanoyl-acyl-carrier-protein onto the lipoyl domains of lipoate-dependent enzymes. Lipoyl-ACP can also act as a substrate although octanoyl-ACP is likely to be the physiological substrate. The protein is Octanoyltransferase of Nocardia farcinica (strain IFM 10152).